The primary structure comprises 195 residues: Probable nicotinate-nucleotide adenylyltransferase (195 aa).

This sequence belongs to the NadD family.

It carries out the reaction nicotinate beta-D-ribonucleotide + ATP + H(+) = deamido-NAD(+) + diphosphate. It functions in the pathway cofactor biosynthesis; NAD(+) biosynthesis; deamido-NAD(+) from nicotinate D-ribonucleotide: step 1/1. Functionally, catalyzes the reversible adenylation of nicotinate mononucleotide (NaMN) to nicotinic acid adenine dinucleotide (NaAD). This Chlorobaculum parvum (strain DSM 263 / NCIMB 8327) (Chlorobium vibrioforme subsp. thiosulfatophilum) protein is Probable nicotinate-nucleotide adenylyltransferase.